The sequence spans 459 residues: Cysteine--tRNA ligase (459 aa).

Cys28 contacts Zn(2+). The 'HIGH' region signature appears at 30–40; that stretch reads VTVYDLCHIGH. Residues Cys209, His234, and Glu238 each coordinate Zn(2+). Residues 266–270 carry the 'KMSKS' region motif; the sequence is KMSKS. Lys269 contributes to the ATP binding site.

The protein belongs to the class-I aminoacyl-tRNA synthetase family. Monomer. Requires Zn(2+) as cofactor.

It localises to the cytoplasm. It carries out the reaction tRNA(Cys) + L-cysteine + ATP = L-cysteinyl-tRNA(Cys) + AMP + diphosphate. This chain is Cysteine--tRNA ligase, found in Haemophilus influenzae (strain PittGG).